A 398-amino-acid chain; its full sequence is Peptidyl-prolyl cis-trans isomerase D (398 aa).

One can recognise a PPIase cyclophilin-type domain in the interval 21-185 (FGSSPASRPG…EDVKIVDCGE (165 aa)). TPR repeat units follow at residues 229-262 (GLAL…LQLH), 282-323 (TSIQ…PSTE), and 335-368 (AKAF…APED).

This sequence belongs to the cyclophilin-type PPIase family. PPIase D subfamily.

The protein resides in the cytoplasm. It carries out the reaction [protein]-peptidylproline (omega=180) = [protein]-peptidylproline (omega=0). Its function is as follows. PPIases accelerate the folding of proteins. It catalyzes the cis-trans isomerization of proline imidic peptide bonds in oligopeptides. The sequence is that of Peptidyl-prolyl cis-trans isomerase D (CPR6) from Mycosarcoma maydis (Corn smut fungus).